We begin with the raw amino-acid sequence, 75 residues long: Large ribosomal subunit protein bL31 (75 aa).

It belongs to the bacterial ribosomal protein bL31 family. Type A subfamily. As to quaternary structure, part of the 50S ribosomal subunit.

Binds the 23S rRNA. This is Large ribosomal subunit protein bL31 from Chlorobium limicola (strain DSM 245 / NBRC 103803 / 6330).